The chain runs to 234 residues: Phosphoribosylaminoimidazole-succinocarboxamide synthase (234 aa).

Belongs to the SAICAR synthetase family.

The enzyme catalyses 5-amino-1-(5-phospho-D-ribosyl)imidazole-4-carboxylate + L-aspartate + ATP = (2S)-2-[5-amino-1-(5-phospho-beta-D-ribosyl)imidazole-4-carboxamido]succinate + ADP + phosphate + 2 H(+). The protein operates within purine metabolism; IMP biosynthesis via de novo pathway; 5-amino-1-(5-phospho-D-ribosyl)imidazole-4-carboxamide from 5-amino-1-(5-phospho-D-ribosyl)imidazole-4-carboxylate: step 1/2. This Sulfurisphaera tokodaii (strain DSM 16993 / JCM 10545 / NBRC 100140 / 7) (Sulfolobus tokodaii) protein is Phosphoribosylaminoimidazole-succinocarboxamide synthase.